A 1422-amino-acid polypeptide reads, in one-letter code: Guanine nucleotide exchange factor subunit RIC1 (1422 aa).

2 WD repeats span residues 64-103 (TQFGSYKQAEWRPDSTMIAVSTANGYILFFHITSSRGDKY) and 304-343 (NKTGAVKLIRWSPDNSAVIVTWEYGGLSLWSVFGAQLICT). Disordered stretches follow at residues 442 to 462 (NPKYSSARAERMPRHEKSPFA) and 986 to 1005 (SGESETPPSTPTSQEPSSSG). Positions 449-460 (RAERMPRHEKSP) are enriched in basic and acidic residues. 2 positions are modified to phosphothreonine: Thr-991 and Thr-995. Phosphoserine occurs at positions 1014, 1016, 1018, 1036, and 1171. A disordered region spans residues 1021-1048 (AENVPPGKFGLQKTLSMPTGPSGKRWSK). 2 disordered regions span residues 1179–1198 (THRDTDRASSPGPQMQDAFL) and 1355–1422 (DTFQ…CSVS). Positions 1378–1396 (GSCSHGSISQSEPGSNNVV) are enriched in polar residues. Positions 1403–1412 (TTQADEEEPL) are enriched in acidic residues.

Belongs to the RIC1 family. In terms of assembly, forms a complex with RGP1; the interaction enhances RAB6A GTPase activity. Interacts (via central domain) with RGP1. Interacts with RAB6A; the interaction is direct with a preference for RAB6A-GDP. Interacts (via C-terminus domain) with RAB33B; the interaction is direct with a preference for RAB33B-GTP. Interacts with GJA1. As to expression, expressed in the eye lens.

It is found in the cytoplasm. The protein localises to the cytosol. The protein resides in the membrane. Functionally, the RIC1-RGP1 complex acts as a guanine nucleotide exchange factor (GEF), which activates RAB6A by exchanging bound GDP for free GTP, and may thereby be required for efficient fusion of endosome-derived vesicles with the Golgi compartment. The RIC1-RGP1 complex participates in the recycling of mannose-6-phosphate receptors. Required for phosphorylation and localization of GJA1. Is a regulator of procollagen transport and secretion, and is required for correct cartilage morphogenesis and development of the craniofacial skeleton. The sequence is that of Guanine nucleotide exchange factor subunit RIC1 from Mus musculus (Mouse).